A 156-amino-acid chain; its full sequence is MKVIEGVVATPNARVAIAIARFNNFINDSLLQGAIDALKRIGQVADDNITVVWVPGAYELPLTARVLANTGKYDAVIALGTVIRGGTAHFEYVAGEASSGLGSVSLNTEIPVAFGVLTTESIEQAIERAGTKAGNKGAEAALTALEMINVIKAIKA.

5-amino-6-(D-ribitylamino)uracil is bound by residues Phe22, 57–59 (AYE), and 81–83 (TVI). A (2S)-2-hydroxy-3-oxobutyl phosphate-binding site is contributed by 86–87 (GT). His89 serves as the catalytic Proton donor. Phe114 is a binding site for 5-amino-6-(D-ribitylamino)uracil. A (2S)-2-hydroxy-3-oxobutyl phosphate-binding site is contributed by Arg128.

The protein belongs to the DMRL synthase family. Forms an icosahedral capsid composed of 60 subunits, arranged as a dodecamer of pentamers.

The catalysed reaction is (2S)-2-hydroxy-3-oxobutyl phosphate + 5-amino-6-(D-ribitylamino)uracil = 6,7-dimethyl-8-(1-D-ribityl)lumazine + phosphate + 2 H2O + H(+). It functions in the pathway cofactor biosynthesis; riboflavin biosynthesis; riboflavin from 2-hydroxy-3-oxobutyl phosphate and 5-amino-6-(D-ribitylamino)uracil: step 1/2. In terms of biological role, catalyzes the formation of 6,7-dimethyl-8-ribityllumazine by condensation of 5-amino-6-(D-ribitylamino)uracil with 3,4-dihydroxy-2-butanone 4-phosphate. This is the penultimate step in the biosynthesis of riboflavin. This is 6,7-dimethyl-8-ribityllumazine synthase from Serratia proteamaculans (strain 568).